Here is a 507-residue protein sequence, read N- to C-terminus: Ribose import ATP-binding protein RbsA (507 aa).

ABC transporter domains lie at 7-242 (LEMR…VGRP) and 253-497 (IPLG…TGVT). 39–46 (GENGAGKS) is an ATP binding site.

This sequence belongs to the ABC transporter superfamily. Ribose importer (TC 3.A.1.2.1) family. In terms of assembly, the complex is composed of an ATP-binding protein (RbsA), two transmembrane proteins (RbsC) and a solute-binding protein (RbsB).

The protein localises to the cell inner membrane. It carries out the reaction D-ribose(out) + ATP + H2O = D-ribose(in) + ADP + phosphate + H(+). Functionally, part of the ABC transporter complex RbsABC involved in ribose import. Responsible for energy coupling to the transport system. This chain is Ribose import ATP-binding protein RbsA, found in Yersinia pestis bv. Antiqua (strain Antiqua).